The sequence spans 39 residues: Gonadal protein gdl-ORF39 (39 aa).

In terms of tissue distribution, in bundles of maturing sperm of larval, pupal and adult males.

This is Gonadal protein gdl-ORF39 (gdl-ORF39) from Drosophila melanogaster (Fruit fly).